The following is a 97-amino-acid chain: Large ribosomal subunit protein bL27 (97 aa).

Positions 1–12 are excised as a propeptide; it reads MLKMNLANLQLF. Residues 14–37 form a disordered region; it reads HKKGGGSTSNGRDSQAKRLGAKAA.

Belongs to the bacterial ribosomal protein bL27 family. In terms of processing, the N-terminus is cleaved by ribosomal processing cysteine protease Prp.

The sequence is that of Large ribosomal subunit protein bL27 from Streptococcus agalactiae serotype III (strain NEM316).